A 299-amino-acid polypeptide reads, in one-letter code: Protoheme IX farnesyltransferase (299 aa).

The next 9 helical transmembrane spans lie at 25 to 45 (VVLL…RAGV), 47 to 67 (WTVL…AAAV), 95 to 115 (AAAI…LLLF), 119 to 139 (LAAW…TGFL), 147 to 167 (IVIG…AVTG), 173 to 193 (PLLL…ALAI), 218 to 238 (VHIL…YAIH), 243 to 263 (LYLV…WVLY), and 279 to 299 (IWYL…LLNI).

It belongs to the UbiA prenyltransferase family. Protoheme IX farnesyltransferase subfamily.

The protein localises to the cell inner membrane. It carries out the reaction heme b + (2E,6E)-farnesyl diphosphate + H2O = Fe(II)-heme o + diphosphate. The protein operates within porphyrin-containing compound metabolism; heme O biosynthesis; heme O from protoheme: step 1/1. Functionally, converts heme B (protoheme IX) to heme O by substitution of the vinyl group on carbon 2 of heme B porphyrin ring with a hydroxyethyl farnesyl side group. This is Protoheme IX farnesyltransferase from Ectopseudomonas mendocina (strain ymp) (Pseudomonas mendocina).